A 31-amino-acid polypeptide reads, in one-letter code: Cyclotide vibi-F (31 aa).

Residues Gly-1–Asn-31 constitute a cross-link (cyclopeptide (Gly-Asn)). Disulfide bonds link Cys-5–Cys-21, Cys-9–Cys-23, and Cys-14–Cys-28.

In terms of processing, this is a cyclic peptide.

Probably participates in a plant defense mechanism. The chain is Cyclotide vibi-F from Viola biflora (Yellow wood violet).